The primary structure comprises 1405 residues: DNA-directed RNA polymerase subunit beta' (1405 aa).

Zn(2+)-binding residues include C70, C72, C85, and C88. D460, D462, and D464 together coordinate Mg(2+). Zn(2+) is bound by residues C815, C889, C896, and C899. Residues 1363 to 1388 are disordered; the sequence is LAHHAERRRRREDPESTANPSAFDVE.

Belongs to the RNA polymerase beta' chain family. As to quaternary structure, the RNAP catalytic core consists of 2 alpha, 1 beta, 1 beta' and 1 omega subunit. When a sigma factor is associated with the core the holoenzyme is formed, which can initiate transcription. Mg(2+) serves as cofactor. Requires Zn(2+) as cofactor.

The catalysed reaction is RNA(n) + a ribonucleoside 5'-triphosphate = RNA(n+1) + diphosphate. Its function is as follows. DNA-dependent RNA polymerase catalyzes the transcription of DNA into RNA using the four ribonucleoside triphosphates as substrates. The polypeptide is DNA-directed RNA polymerase subunit beta' (Chromohalobacter salexigens (strain ATCC BAA-138 / DSM 3043 / CIP 106854 / NCIMB 13768 / 1H11)).